The primary structure comprises 393 residues: Ig gamma-1 chain C region, membrane-bound form (393 aa).

The tract at residues 1-97 (AKTTPPSVYP…ASSTKVDKKI (97 aa)) is CH1. Cysteine 27 and cysteine 82 form a disulfide bridge. The tract at residues 98 to 110 (VPRDCGCKPCICT) is hinge. Residues 111–217 (VPEVSSVFIF…PIEKTISKTK (107 aa)) form a CH2 region. Intrachain disulfides connect cysteine 138-cysteine 198 and cysteine 244-cysteine 302. An N-linked (GlcNAc...) asparagine glycan is attached at asparagine 174. Residues 218-324 (GRPKAPQVYT…EKSLSHSPGL (107 aa)) form a CH3 region. The chain crosses the membrane as a helical span at residues 340–357 (GLWTTITIFISLFLLSVC). At 358–393 (YSAAVTLFKVKWIFSSVVELKQTLVPEYKNMIGQAP) the chain is on the cytoplasmic side.

The protein localises to the cell membrane. In Mus musculus (Mouse), this protein is Ig gamma-1 chain C region, membrane-bound form (Ighg1).